The chain runs to 386 residues: S-adenosylmethionine synthase (386 aa).

An ATP-binding site is contributed by His-16. Asp-18 contacts Mg(2+). Glu-44 is a binding site for K(+). L-methionine is bound by residues Glu-57 and Gln-100. Positions 100–110 (QSRDIAQGVDR) are flexible loop. ATP contacts are provided by residues 165–167 (DAK), Asp-240, 246–247 (RK), Ala-263, and Lys-267. Residue Asp-240 coordinates L-methionine. Lys-271 provides a ligand contact to L-methionine.

This sequence belongs to the AdoMet synthase family. In terms of assembly, homotetramer; dimer of dimers. Mg(2+) is required as a cofactor. The cofactor is K(+).

It is found in the cytoplasm. It catalyses the reaction L-methionine + ATP + H2O = S-adenosyl-L-methionine + phosphate + diphosphate. It participates in amino-acid biosynthesis; S-adenosyl-L-methionine biosynthesis; S-adenosyl-L-methionine from L-methionine: step 1/1. In terms of biological role, catalyzes the formation of S-adenosylmethionine (AdoMet) from methionine and ATP. The overall synthetic reaction is composed of two sequential steps, AdoMet formation and the subsequent tripolyphosphate hydrolysis which occurs prior to release of AdoMet from the enzyme. In Francisella tularensis subsp. holarctica (strain FTNF002-00 / FTA), this protein is S-adenosylmethionine synthase.